The sequence spans 1705 residues: Alpha-protein kinase 3 (1705 aa).

The segment covering 1 to 10 (MGSRRAPSRG) has biased composition (low complexity). Residues 1 to 33 (MGSRRAPSRGWGAGGRSGAGGDGEDDGPVWIPS) are disordered. A compositionally biased stretch (gly residues) spans 11–21 (WGAGGRSGAGG). The 92-residue stretch at 77 to 168 (PLFETTLKSR…GIVSCSGVLE (92 aa)) folds into the Ig-like 1 domain. A compositionally biased stretch (basic and acidic residues) spans 211–221 (DTLRKLSPDRF). Disordered regions lie at residues 211-244 (DTLR…EPEG), 308-749 (LKEE…GPRA), 792-845 (GPLS…ERPG), 1082-1145 (GLAS…KFPG), and 1173-1226 (RAAG…MLEV). Serine 228 carries the phosphoserine modification. Residues 308–342 (LKEESGAKKKKKDEESKQGLRKPELEKAAQSRRSS) show a composition bias toward basic and acidic residues. The segment covering 370 to 382 (PRGRAARGPGSSG) has biased composition (low complexity). The segment covering 495 to 504 (DSKPISSLSQ) has biased composition (polar residues). Residues 557 to 579 (TTTAPTMSASSSSDVASIGVSTS) show a composition bias toward low complexity. Over residues 598 to 609 (TSANQRTGSKKN) the composition is skewed to polar residues. Residues 647-657 (ESKRPQSDRSA) show a composition bias toward basic and acidic residues. Residues 666–676 (RAETQLETTQA) are compositionally biased toward polar residues. Positions 679 to 700 (KIQEDRKAQADKGTQEDRRMQG) are enriched in basic and acidic residues. Positions 708-729 (KGTQSEGSAPTAMEGQSEQEVA) are enriched in polar residues. Pro residues predominate over residues 736–745 (SRTPKLPPTA). The span at 829 to 844 (AKQEDSPFQCPKEERP) shows a compositional bias: basic and acidic residues. The span at 1120–1131 (GQAAPGQGPSAE) shows a compositional bias: low complexity. Serine 1222 carries the phosphoserine modification. An Ig-like 2 domain is found at 1274 to 1362 (PQVIRKIRVE…GSASTDFCLS (89 aa)). Cysteine 1296 and cysteine 1346 form a disulfide bridge. An Alpha-type protein kinase domain is found at 1390 to 1625 (KGLADSGCWG…YCELLGLTPL (236 aa)). Positions 1628 to 1705 (PEAAHPQAKA…EEGSKAQGMR (78 aa)) are disordered. Positions 1664–1696 (PQGTRKSAPSSKATPQASEPVTTQLLGQPPTQE) are enriched in polar residues.

The protein belongs to the protein kinase superfamily. Alpha-type protein kinase family. ALPK subfamily.

The protein localises to the nucleus. It catalyses the reaction L-seryl-[protein] + ATP = O-phospho-L-seryl-[protein] + ADP + H(+). It carries out the reaction L-threonyl-[protein] + ATP = O-phospho-L-threonyl-[protein] + ADP + H(+). In terms of biological role, involved in cardiomyocyte differentiation. This chain is Alpha-protein kinase 3, found in Homo sapiens (Human).